Here is a 474-residue protein sequence, read N- to C-terminus: PTS system sucrose-specific EIIBC component (474 aa).

The PTS EIIB type-1 domain maps to 4–87 (SQIAQQVIDK…SKLLGIGDMT (84 aa)). The active-site Phosphocysteine intermediate; for EIIB activity is cysteine 26. The PTS EIIC type-1 domain occupies 107–474 (KGLADIFVPI…LGKRAQLKAE (368 aa)). 10 helical membrane-spanning segments follow: residues 109–129 (LADI…LMGI), 158–178 (FINT…GFSA), 182–202 (FGGN…PALS), 229–249 (VGYQ…ATLE), 264–284 (ITPL…IGPI), 303–323 (LGFV…ITGM), 345–365 (FIFP…LGAA), 376–396 (IAVP…MFGV), 403–423 (PFIS…LFNV), and 444–464 (LAMY…LTVI).

The protein localises to the cell inner membrane. The enzyme catalyses N(pros)-phospho-L-histidyl-[protein](out) + sucrose = sucrose 6(G)-phosphate(in) + L-histidyl-[protein]. Its function is as follows. The phosphoenolpyruvate-dependent sugar phosphotransferase system (sugar PTS), a major carbohydrate active transport system, catalyzes the phosphorylation of incoming sugar substrates concomitantly with their translocation across the cell membrane. This system is involved in sucrose transport. The protein is PTS system sucrose-specific EIIBC component (scrA) of Pasteurella multocida (strain Pm70).